The following is a 178-amino-acid chain: UPF0114 protein HPSH_00970 (178 aa).

Transmembrane regions (helical) follow at residues 15 to 35 (WLLA…GYVF), 54 to 74 (LVLS…VLMV), 102 to 122 (FNAL…IFLL), and 145 to 165 (PIFW…LAAV).

This sequence belongs to the UPF0114 family.

The protein localises to the cell membrane. This is UPF0114 protein HPSH_00970 from Helicobacter pylori (strain Shi470).